The primary structure comprises 507 residues: FLYWCH transcription factor 1 (507 aa).

The span at 1 to 26 shows a compositional bias: low complexity; it reads MYSPESMNSNISSPSPPSSSSLNAPS. Residues 1 to 51 are disordered; the sequence is MYSPESMNSNISSPSPPSSSSLNAPSLADAPEVRSDDGEAETSEPSTSVTA. The FLYWCH-type zinc finger occupies 135–192; it reads KKTRLKVFSNGFFMTFDKLSSCQKKYFWRCEYKNTCKARMHTDIVTEKILTFIHEHNH.

Probable transcription factor. Binds to the DNA sequence motif 5'-[AG]GGCGCCG-3' in the promoters of target genes, including micro-RNA genes, in order to repress expression, and acting redundantly with flh-2. The chain is FLYWCH transcription factor 1 from Caenorhabditis elegans.